A 518-amino-acid polypeptide reads, in one-letter code: Membrane-bound lytic murein transglycosylase F (518 aa).

Residues 1–21 form the signal peptide; that stretch reads MKKLKINYLFIGILALLLAVA. The interval 22–269 is non-LT domain; that stretch reads LWPSIPWFGK…RIEEKYLGHG (248 aa). Positions 270 to 518 are LT domain; the sequence is DDFDYVDTRT…SRKGSEEKQN (249 aa). The active site involves Glu-314.

This sequence in the N-terminal section; belongs to the bacterial solute-binding protein 3 family. The protein in the C-terminal section; belongs to the transglycosylase Slt family.

The protein localises to the cell outer membrane. The enzyme catalyses Exolytic cleavage of the (1-&gt;4)-beta-glycosidic linkage between N-acetylmuramic acid (MurNAc) and N-acetylglucosamine (GlcNAc) residues in peptidoglycan, from either the reducing or the non-reducing ends of the peptidoglycan chains, with concomitant formation of a 1,6-anhydrobond in the MurNAc residue.. Its function is as follows. Murein-degrading enzyme that degrades murein glycan strands and insoluble, high-molecular weight murein sacculi, with the concomitant formation of a 1,6-anhydromuramoyl product. Lytic transglycosylases (LTs) play an integral role in the metabolism of the peptidoglycan (PG) sacculus. Their lytic action creates space within the PG sacculus to allow for its expansion as well as for the insertion of various structures such as secretion systems and flagella. This Escherichia coli O157:H7 protein is Membrane-bound lytic murein transglycosylase F.